Reading from the N-terminus, the 660-residue chain is Protein translocase subunit SecA 2 (660 aa).

ATP contacts are provided by residues glutamine 113, 131-135 (GEGKT), and aspartate 539.

This sequence belongs to the SecA family. Monomer and homodimer. Part of the essential Sec protein translocation apparatus which comprises SecA, SecYEG and auxiliary proteins SecDF-YajC and YidC.

The protein resides in the cell inner membrane. It is found in the cytoplasm. The catalysed reaction is ATP + H2O + cellular proteinSide 1 = ADP + phosphate + cellular proteinSide 2.. In terms of biological role, part of the Sec protein translocase complex. Interacts with the SecYEG preprotein conducting channel. Has a central role in coupling the hydrolysis of ATP to the transfer of proteins into and across the cell membrane, serving both as a receptor for the preprotein-SecB complex and as an ATP-driven molecular motor driving the stepwise translocation of polypeptide chains across the membrane. The chain is Protein translocase subunit SecA 2 from Bordetella avium (strain 197N).